The chain runs to 382 residues: D-galactonate dehydratase (382 aa).

Asp-183 contributes to the Mg(2+) binding site. The active-site Proton donor is His-185. The Mg(2+) site is built by Glu-209 and Glu-235. His-285 serves as the catalytic Proton acceptor.

Belongs to the mandelate racemase/muconate lactonizing enzyme family. GalD subfamily. Mg(2+) is required as a cofactor.

The enzyme catalyses D-galactonate = 2-dehydro-3-deoxy-D-galactonate + H2O. It functions in the pathway carbohydrate acid metabolism; D-galactonate degradation; D-glyceraldehyde 3-phosphate and pyruvate from D-galactonate: step 1/3. Its function is as follows. Catalyzes the dehydration of D-galactonate to 2-keto-3-deoxy-D-galactonate. This is D-galactonate dehydratase from Pectobacterium atrosepticum (strain SCRI 1043 / ATCC BAA-672) (Erwinia carotovora subsp. atroseptica).